The following is a 486-amino-acid chain: 3-dehydroshikimate dehydratase (486 aa).

It catalyses the reaction 3-dehydroshikimate = 3,4-dihydroxybenzoate + H2O. It functions in the pathway aromatic compound metabolism; 3,4-dihydroxybenzoate biosynthesis; 3,4-dihydroxybenzoate from 3-dehydroquinate: step 2/2. In terms of biological role, converts dehydroshikimate to protocatechuate. This Acinetobacter baylyi (strain ATCC 33305 / BD413 / ADP1) protein is 3-dehydroshikimate dehydratase (quiC).